A 367-amino-acid polypeptide reads, in one-letter code: tRNA 2-selenouridine synthase (367 aa).

The region spanning 15–138 (FLQARPLIDV…LRTFLIQILE (124 aa)) is the Rhodanese domain. Residue Cys-98 is the S-selanylcysteine intermediate of the active site.

It belongs to the SelU family. As to quaternary structure, monomer.

It carries out the reaction 5-methylaminomethyl-2-thiouridine(34) in tRNA + selenophosphate + (2E)-geranyl diphosphate + H2O + H(+) = 5-methylaminomethyl-2-selenouridine(34) in tRNA + (2E)-thiogeraniol + phosphate + diphosphate. The enzyme catalyses 5-methylaminomethyl-2-thiouridine(34) in tRNA + (2E)-geranyl diphosphate = 5-methylaminomethyl-S-(2E)-geranyl-thiouridine(34) in tRNA + diphosphate. The catalysed reaction is 5-methylaminomethyl-S-(2E)-geranyl-thiouridine(34) in tRNA + selenophosphate + H(+) = 5-methylaminomethyl-2-(Se-phospho)selenouridine(34) in tRNA + (2E)-thiogeraniol. It catalyses the reaction 5-methylaminomethyl-2-(Se-phospho)selenouridine(34) in tRNA + H2O = 5-methylaminomethyl-2-selenouridine(34) in tRNA + phosphate. In terms of biological role, involved in the post-transcriptional modification of the uridine at the wobble position (U34) of tRNA(Lys), tRNA(Glu) and tRNA(Gln). Catalyzes the conversion of 2-thiouridine (S2U-RNA) to 2-selenouridine (Se2U-RNA). Acts in a two-step process involving geranylation of 2-thiouridine (S2U) to S-geranyl-2-thiouridine (geS2U) and subsequent selenation of the latter derivative to 2-selenouridine (Se2U) in the tRNA chain. This chain is tRNA 2-selenouridine synthase, found in Shewanella denitrificans (strain OS217 / ATCC BAA-1090 / DSM 15013).